The following is a 393-amino-acid chain: S-adenosylmethionine synthase 2 (393 aa).

Residue E9 participates in Mg(2+) binding. ATP is bound at residue H15. K(+) is bound at residue E43. Positions 56 and 99 each coordinate L-methionine. Residues 167 to 169 (DGK), 235 to 238 (SGRF), D246, 252 to 253 (RK), A269, K273, and K277 each bind ATP. D246 serves as a coordination point for L-methionine. L-methionine is bound at residue K277.

This sequence belongs to the AdoMet synthase family. In terms of assembly, homotetramer. It depends on Mn(2+) as a cofactor. Requires Mg(2+) as cofactor. Co(2+) is required as a cofactor. K(+) serves as cofactor.

Its subcellular location is the cytoplasm. The enzyme catalyses L-methionine + ATP + H2O = S-adenosyl-L-methionine + phosphate + diphosphate. The protein operates within amino-acid biosynthesis; S-adenosyl-L-methionine biosynthesis; S-adenosyl-L-methionine from L-methionine: step 1/1. Functionally, catalyzes the formation of S-adenosylmethionine from methionine and ATP. The reaction comprises two steps that are both catalyzed by the same enzyme: formation of S-adenosylmethionine (AdoMet) and triphosphate, and subsequent hydrolysis of the triphosphate. This Populus trichocarpa (Western balsam poplar) protein is S-adenosylmethionine synthase 2 (METK2).